The sequence spans 476 residues: RNA-splicing ligase RtcB homolog (476 aa).

Residues D90, C93, H198, H230, and H324 each contribute to the Mn(2+) site. A GMP-binding site is contributed by 197–201 (NHYAE). GMP contacts are provided by residues 324–325 (HN), 373–376 (GGTM), S380, 399–402 (HGAG), and K475. Catalysis depends on H399, which acts as the GMP-histidine intermediate.

Belongs to the RtcB family. In terms of assembly, catalytic component of the tRNA-splicing ligase complex. Mn(2+) is required as a cofactor.

The enzyme catalyses a 3'-end 3'-phospho-ribonucleotide-RNA + a 5'-end dephospho-ribonucleoside-RNA + GTP = a ribonucleotidyl-ribonucleotide-RNA + GMP + diphosphate. It carries out the reaction a 3'-end 2',3'-cyclophospho-ribonucleotide-RNA + a 5'-end dephospho-ribonucleoside-RNA + GTP + H2O = a ribonucleotidyl-ribonucleotide-RNA + GMP + diphosphate + H(+). Its function is as follows. Catalytic subunit of the tRNA-splicing ligase complex that acts by directly joining spliced tRNA halves to mature-sized tRNAs by incorporating the precursor-derived splice junction phosphate into the mature tRNA as a canonical 3',5'-phosphodiester. May act as an RNA ligase with broad substrate specificity, and may function toward other RNAs. This Chlamydomonas reinhardtii (Chlamydomonas smithii) protein is RNA-splicing ligase RtcB homolog.